We begin with the raw amino-acid sequence, 844 residues long: RPA-related protein RADX (844 aa).

The segment at residues 228–331 (WHNRKNFPAL…LISTMEICLN (104 aa)) is a DNA-binding region (OB). Disordered regions lie at residues 571 to 609 (PASE…RPMD) and 626 to 664 (GPTA…TGKS). Polar residues predominate over residues 572–587 (ASETLQNASPPSTSQA). The segment covering 590–608 (KEGHYHERGSKRSQDDRPM) has biased composition (basic and acidic residues). Residues 652 to 662 (SRENSTANATG) show a composition bias toward polar residues.

The protein resides in the chromosome. Its function is as follows. Single-stranded DNA-binding protein recruited to replication forks to maintain genome stability. Prevents fork collapse by antagonizing the accumulation of RAD51 at forks to ensure the proper balance of fork remodeling and protection without interfering with the capacity of cells to complete homologous recombination of double-strand breaks. This Rattus norvegicus (Rat) protein is RPA-related protein RADX.